A 96-amino-acid chain; its full sequence is Large ribosomal subunit protein bL27 (96 aa).

The tract at residues 12-33 (HKGGGSSANGRNSAGRRLGAKA) is disordered. Residues 19–28 (ANGRNSAGRR) are compositionally biased toward low complexity.

This sequence belongs to the bacterial ribosomal protein bL27 family.

This is Large ribosomal subunit protein bL27 from Lactobacillus helveticus (strain DPC 4571).